The sequence spans 735 residues: Glycogen [starch] synthase, muscle (735 aa).

Phosphoserine; by AMPK and PKA is present on Ser-8. Ser-11 is subject to Phosphoserine. Lys-39 contributes to the UDP binding site. 2 residues coordinate UDP-alpha-D-glucose: His-205 and Arg-211. Alpha-D-glucose 6-phosphate-binding residues include His-291, Glu-292, Gln-294, His-297, and Lys-301. A UDP-binding site is contributed by Arg-331. Residue Arg-331 coordinates UDP-alpha-D-glucose. Ser-412 is modified (phosphoserine). Residue His-501 participates in alpha-D-glucose 6-phosphate binding. UDP-alpha-D-glucose is bound by residues Glu-510, Trp-512, and Gly-513. Position 515 (Thr-515) interacts with UDP. Alpha-D-glucose 6-phosphate-binding residues include Arg-582 and Arg-586. Residues 629 to 735 (DATQGYRYPR…PASSLGEERN (107 aa)) form a disordered region. At Ser-641 the chain carries Phosphoserine; by DYRK2, GSK3-alpha, GSK3-beta and PASK. Phosphoserine; by GSK3-alpha and GSK3-beta occurs at positions 645 and 649. Ser-652 is modified (phosphoserine). Ser-653 is subject to Phosphoserine; by GSK3-alpha and GSK3-beta. Residue Ser-657 is modified to Phosphoserine; by CK2. The span at 658–681 (EDEEEPRDGLPEEDGERYDEDEEA) shows a compositional bias: acidic residues. The span at 682–695 (AKDRRNIRAPEWPR) shows a compositional bias: basic and acidic residues. Ser-698 is subject to Phosphoserine. Residues 698 to 735 (SCTSSSGGSKRSNSVDTSSLSTPSEPLSPASSLGEERN) show a composition bias toward low complexity. Thr-700 carries the phosphothreonine modification. Residues Ser-709 and Ser-711 each carry the phosphoserine modification. At Thr-719 the chain carries Phosphothreonine. 2 positions are modified to phosphoserine: Ser-725 and Ser-729.

It belongs to the glycosyltransferase 3 family. Part of the GYS1-GYG1 complex, a heterooctamer composed of a tetramer of GYS1 and 2 dimers of GYG1, where each GYS1 protomer binds to one GYG1 subunit (via GYG1 C-terminus); the GYS1 tetramer may dissociate from GYG1 dimers to continue glycogen polymerization on its own. Post-translationally, phosphorylation at Ser-8 is required for modification of Ser-11 by casein kinase I. Phosphorylated at Ser-641 by PASK, leading to inactivation; phosphorylation by PASK is inhibited by glycogen. Dephosphorylation at Ser-641 and Ser-645 by PP1 activates the enzyme. Phosphorylation at Ser-8 by AMPK inactivates the enzyme activity. Phosphorylated at Ser-641 by DYRK2, leading to inactivation. Primed phosphorylation at Ser-657 (site 5) by CSNK2A1 and CSNK2A2 is required for inhibitory phosphorylation at Ser-641 (site 3a), Ser-645 (site 3b), Ser-649 (site 3c) and Ser-653 (site 4) by GSK3A and GSK3B.

It catalyses the reaction [(1-&gt;4)-alpha-D-glucosyl](n) + UDP-alpha-D-glucose = [(1-&gt;4)-alpha-D-glucosyl](n+1) + UDP + H(+). It functions in the pathway glycan biosynthesis; glycogen biosynthesis. Allosteric activation by glucose-6-phosphate. Phosphorylation reduces the activity towards UDP-glucose. When in the non-phosphorylated state, glycogen synthase does not require glucose-6-phosphate as an allosteric activator; when phosphorylated it does. Functionally, glycogen synthase participates in the glycogen biosynthetic process along with glycogenin and glycogen branching enzyme. Extends the primer composed of a few glucose units formed by glycogenin by adding new glucose units to it. In this context, glycogen synthase transfers the glycosyl residue from UDP-Glc to the non-reducing end of alpha-1,4-glucan. This Oryctolagus cuniculus (Rabbit) protein is Glycogen [starch] synthase, muscle.